The following is a 180-amino-acid chain: UPF0102 protein Tery_0733 (180 aa).

The protein belongs to the UPF0102 family.

In Trichodesmium erythraeum (strain IMS101), this protein is UPF0102 protein Tery_0733.